Here is a 373-residue protein sequence, read N- to C-terminus: sn-glycerol-3-phosphate import ATP-binding protein UgpC (373 aa).

Residues 4-235 (LTLSNITKSY…PASVFVATFI (232 aa)) form the ABC transporter domain. Residue 37 to 44 (GPSGCGKS) coordinates ATP.

This sequence belongs to the ABC transporter superfamily. sn-glycerol-3-phosphate importer (TC 3.A.1.1.3) family. In terms of assembly, the complex is composed of two ATP-binding proteins (UgpC), two transmembrane proteins (UgpA and UgpE) and a solute-binding protein (UgpB).

The protein localises to the cell inner membrane. The enzyme catalyses sn-glycerol 3-phosphate(out) + ATP + H2O = sn-glycerol 3-phosphate(in) + ADP + phosphate + H(+). In terms of biological role, part of the ABC transporter complex UgpBAEC involved in sn-glycerol-3-phosphate (G3P) import. Responsible for energy coupling to the transport system. This Psychromonas ingrahamii (strain DSM 17664 / CCUG 51855 / 37) protein is sn-glycerol-3-phosphate import ATP-binding protein UgpC.